The chain runs to 184 residues: Large ribosomal subunit protein uL6 (184 aa).

Belongs to the universal ribosomal protein uL6 family. Part of the 50S ribosomal subunit.

Functionally, this protein binds to the 23S rRNA, and is important in its secondary structure. It is located near the subunit interface in the base of the L7/L12 stalk, and near the tRNA binding site of the peptidyltransferase center. In Pyrococcus furiosus (strain ATCC 43587 / DSM 3638 / JCM 8422 / Vc1), this protein is Large ribosomal subunit protein uL6.